The primary structure comprises 128 residues: Large ribosomal subunit protein bL20c (128 aa).

This sequence belongs to the bacterial ribosomal protein bL20 family.

The protein localises to the plastid. Binds directly to 23S ribosomal RNA and is necessary for the in vitro assembly process of the 50S ribosomal subunit. It is not involved in the protein synthesizing functions of that subunit. The protein is Large ribosomal subunit protein bL20c (rpl20) of Epifagus virginiana (Beechdrops).